The primary structure comprises 336 residues: Uroporphyrinogen decarboxylase (336 aa).

Substrate contacts are provided by residues 24–28 (RQVGR), Asp73, Tyr142, Ser197, and His312.

The protein belongs to the uroporphyrinogen decarboxylase family. In terms of assembly, homodimer.

The protein localises to the cytoplasm. The catalysed reaction is uroporphyrinogen III + 4 H(+) = coproporphyrinogen III + 4 CO2. Its pathway is porphyrin-containing compound metabolism; protoporphyrin-IX biosynthesis; coproporphyrinogen-III from 5-aminolevulinate: step 4/4. In terms of biological role, catalyzes the decarboxylation of four acetate groups of uroporphyrinogen-III to yield coproporphyrinogen-III. The sequence is that of Uroporphyrinogen decarboxylase from Chlamydia trachomatis serovar L2 (strain ATCC VR-902B / DSM 19102 / 434/Bu).